A 1262-amino-acid polypeptide reads, in one-letter code: Separin homolog sep-1 (1262 aa).

Positions 957–1051 (VQNAYYILDP…SVRTIPQALG (95 aa)) constitute a Peptidase C50 domain. The active site involves cysteine 1040. A disordered region spans residues 1147–1262 (KDQRNLPQTP…ARTPSRSRNL (116 aa)). Composition is skewed to polar residues over residues 1151 to 1162 (NLPQTPKTSART) and 1177 to 1197 (FVTS…NKSP). A compositionally biased stretch (low complexity) spans 1243 to 1262 (TPTTRTTRSSARTPSRSRNL).

Forms a complex with securin-like protein ify-1 (via C-terminus). Interaction with ify-1 stabilizes sep-1. Also maintains the complex in the cytoplasm during interphase and recruits it to chromosomes during the first meiotic division. Expressed in oocytes. Expressed in male germline. Expressed in spermatocytes but undetectable in spermatids (at protein level).

It is found in the cytoplasm. The protein resides in the chromosome. Its subcellular location is the cytoplasmic granule. The protein localises to the cytoskeleton. It localises to the microtubule organizing center. It is found in the centrosome. The protein resides in the spindle. Its subcellular location is the cleavage furrow. The protein localises to the midbody. The catalysed reaction is All bonds known to be hydrolyzed by this endopeptidase have arginine in P1 and an acidic residue in P4. P6 is often occupied by an acidic residue or by a hydroxy-amino-acid residue, the phosphorylation of which enhances cleavage.. With respect to regulation, probably maintained in an inactive state via its interaction with securin ify-1 which acts as a pseudosubstrate thereby blocking access to the catalytic site. Upon ify-1 degradation at the onset of anaphase, sep-1 is likely to become active. In addition, interaction with ify-1 stabilizes sep-1. Cysteine protease, which plays a central role in homologous chromosome separation during meiosis I and in sister chromatid separation during embryonic mitosis. Promotes chromosome/sister chromatid segregation by cleaving the scc-1 (mitosis) and rec-8 (meiosis) subunits of the cohesin complex at the onset of anaphase. May cleave histone H3-like protein cpar-1 during meiosis I metaphase-anaphase transition. Promotes cortical granule exocytosis after oocyte fertilization during the first meiotic anaphase. Essential for embryonic cytokinesis by regulating rab-11-positive vesicle trafficking at the plasma membrane at the cleavage furrow and midbody. Regulates centriole segregation during spermatocyte meiosis. Required for embryonic anterior-posterior axis formation. This chain is Separin homolog sep-1, found in Caenorhabditis elegans.